The sequence spans 332 residues: L-lactate dehydrogenase A chain (332 aa).

An N-acetylalanine modification is found at Ala-2. Residue Lys-5 is modified to N6-acetyllysine; alternate. The residue at position 5 (Lys-5) is an N6-succinyllysine; alternate. Tyr-10 bears the Phosphotyrosine mark. Lys-14 is modified (N6-acetyllysine). Thr-18 bears the Phosphothreonine mark. 29-57 (GAVGMACAISILMKDLADELALVDVIEDK) serves as a coordination point for NAD(+). The residue at position 57 (Lys-57) is an N6-acetyllysine; alternate. Lys-57 participates in a covalent cross-link: Glycyl lysine isopeptide (Lys-Gly) (interchain with G-Cter in SUMO2); alternate. An N6-acetyllysine modification is found at Lys-81. An NAD(+)-binding site is contributed by Arg-99. Arg-106 is a substrate binding site. N6-acetyllysine; alternate is present on Lys-118. Residue Lys-118 is modified to N6-succinyllysine; alternate. The residue at position 126 (Lys-126) is an N6-acetyllysine. Asn-138 contacts NAD(+). Residues Asn-138 and Arg-169 each coordinate substrate. The active-site Proton acceptor is His-193. Residues Lys-224 and Lys-232 each carry the N6-acetyllysine modification. At Tyr-239 the chain carries Phosphotyrosine. N6-acetyllysine is present on Lys-243. Thr-248 serves as a coordination point for substrate. Thr-309 bears the Phosphothreonine mark. The residue at position 310 (Ser-310) is a Phosphoserine. Residue Lys-318 is modified to N6-acetyllysine; alternate. Residue Lys-318 is modified to N6-succinyllysine; alternate. The residue at position 322 (Thr-322) is a Phosphothreonine.

The protein belongs to the LDH/MDH superfamily. LDH family. As to quaternary structure, homotetramer. Interacts with PTEN upstream reading frame protein MP31. Interacts with folliculin FLCN; the interaction is direct and inhibits enzymatic activity. In terms of processing, ISGylated. Predominantly expressed in anaerobic tissues such as skeletal muscle and liver.

The protein localises to the cytoplasm. It carries out the reaction (S)-lactate + NAD(+) = pyruvate + NADH + H(+). The protein operates within fermentation; pyruvate fermentation to lactate; (S)-lactate from pyruvate: step 1/1. Its activity is regulated as follows. Fermentation of pyruvate to lactate is inhibited when bound to folliculin FLCN, perhaps partly by FLCN preventing binding of cofactor NADH. Its function is as follows. Interconverts simultaneously and stereospecifically pyruvate and lactate with concomitant interconversion of NADH and NAD(+). This chain is L-lactate dehydrogenase A chain, found in Homo sapiens (Human).